The primary structure comprises 393 residues: Ubiquitin-like modifier-activating enzyme 5 (393 aa).

ATP is bound by residues glycine 75, aspartate 96, lysine 119, asparagine 142, and asparagine 175. The Zn(2+) site is built by cysteine 217 and cysteine 220. Cysteine 241 serves as the catalytic Glycyl thioester intermediate. Zn(2+) contacts are provided by cysteine 294 and cysteine 299.

This sequence belongs to the ubiquitin-activating E1 family. UBA5 subfamily.

In terms of biological role, E1-like enzyme which activates UFM1. This chain is Ubiquitin-like modifier-activating enzyme 5, found in Bombyx mori (Silk moth).